The following is a 340-amino-acid chain: 4-hydroxy-2-oxovalerate aldolase (340 aa).

The region spanning 8–260 (VILHDMSLRD…SHGINLYDIM (253 aa)) is the Pyruvate carboxyltransferase domain. Residue 16-17 (RD) coordinates substrate. Residue aspartate 17 coordinates Mn(2+). Histidine 20 serves as the catalytic Proton acceptor. Substrate-binding residues include serine 170 and histidine 199. Mn(2+)-binding residues include histidine 199 and histidine 201. Tyrosine 290 contacts substrate.

It belongs to the 4-hydroxy-2-oxovalerate aldolase family.

It catalyses the reaction (S)-4-hydroxy-2-oxopentanoate = acetaldehyde + pyruvate. This is 4-hydroxy-2-oxovalerate aldolase from Shewanella pealeana (strain ATCC 700345 / ANG-SQ1).